Reading from the N-terminus, the 368-residue chain is L-cysteine desulfhydrase Cds1 (368 aa).

An N6-(pyridoxal phosphate)lysine modification is found at Lys-67. Pyridoxal 5'-phosphate-binding positions include 203-207 (GTGGT) and Ser-299.

Belongs to the cysteine synthase/cystathionine beta-synthase family. Cds1 subfamily. It depends on pyridoxal 5'-phosphate as a cofactor.

The protein localises to the cytoplasm. The enzyme catalyses L-cysteine + H2O = hydrogen sulfide + pyruvate + NH4(+) + H(+). Functionally, a cysteine desulfhydrase that generates hydrogen sulfide, H(2)S. The H(2)S produced by this enzyme stimulates respiration in M.tuberculosis, mediated primarily via cytochrome bd with a lesser contribution from cytochrome bc1/aa3. H(2)S modulates the balance between respiration and glycolysis, and also contributes to redox homeostasis. Probably eliminates toxic levels of Cys (which can induce oxidative stress). The sequence is that of L-cysteine desulfhydrase Cds1 from Mycobacterium tuberculosis (strain ATCC 25177 / H37Ra).